The primary structure comprises 339 residues: Uroporphyrinogen decarboxylase (339 aa).

Substrate-binding positions include 21-25 (RQAGR), D71, Y147, S202, and H315.

It belongs to the uroporphyrinogen decarboxylase family. As to quaternary structure, homodimer.

It localises to the cytoplasm. The catalysed reaction is uroporphyrinogen III + 4 H(+) = coproporphyrinogen III + 4 CO2. Its pathway is porphyrin-containing compound metabolism; protoporphyrin-IX biosynthesis; coproporphyrinogen-III from 5-aminolevulinate: step 4/4. In terms of biological role, catalyzes the decarboxylation of four acetate groups of uroporphyrinogen-III to yield coproporphyrinogen-III. The protein is Uroporphyrinogen decarboxylase of Helicobacter pylori (strain P12).